We begin with the raw amino-acid sequence, 254 residues long: 3-deoxy-manno-octulosonate cytidylyltransferase (254 aa).

It belongs to the KdsB family.

Its subcellular location is the cytoplasm. The catalysed reaction is 3-deoxy-alpha-D-manno-oct-2-ulosonate + CTP = CMP-3-deoxy-beta-D-manno-octulosonate + diphosphate. Its pathway is nucleotide-sugar biosynthesis; CMP-3-deoxy-D-manno-octulosonate biosynthesis; CMP-3-deoxy-D-manno-octulosonate from 3-deoxy-D-manno-octulosonate and CTP: step 1/1. The protein operates within bacterial outer membrane biogenesis; lipopolysaccharide biosynthesis. Activates KDO (a required 8-carbon sugar) for incorporation into bacterial lipopolysaccharide in Gram-negative bacteria. The polypeptide is 3-deoxy-manno-octulosonate cytidylyltransferase (Chlamydia abortus (strain DSM 27085 / S26/3) (Chlamydophila abortus)).